The chain runs to 268 residues: Glutamate 5-kinase (268 aa).

Lys-15 contacts ATP. The substrate site is built by Ser-55, Asp-142, and Asn-158. 178 to 179 serves as a coordination point for ATP; it reads SD.

The protein belongs to the glutamate 5-kinase family.

It is found in the cytoplasm. The catalysed reaction is L-glutamate + ATP = L-glutamyl 5-phosphate + ADP. It functions in the pathway amino-acid biosynthesis; L-proline biosynthesis; L-glutamate 5-semialdehyde from L-glutamate: step 1/2. Its function is as follows. Catalyzes the transfer of a phosphate group to glutamate to form L-glutamate 5-phosphate. The protein is Glutamate 5-kinase of Oenococcus oeni (strain ATCC BAA-331 / PSU-1).